We begin with the raw amino-acid sequence, 454 residues long: Cysteine--tRNA ligase (454 aa).

Residue cysteine 27 participates in Zn(2+) binding. The short motif at 29–39 is the 'HIGH' region element; that stretch reads PTVQDHFHIGH. The Zn(2+) site is built by aspartate 207, histidine 232, and glutamate 236. A 'KMSKS' region motif is present at residues 265–269; the sequence is KMSKS. Residue lysine 268 participates in ATP binding.

Belongs to the class-I aminoacyl-tRNA synthetase family. It depends on Zn(2+) as a cofactor.

Its subcellular location is the cytoplasm. The enzyme catalyses tRNA(Cys) + L-cysteine + ATP = L-cysteinyl-tRNA(Cys) + AMP + diphosphate. This is Cysteine--tRNA ligase from Thermoplasma volcanium (strain ATCC 51530 / DSM 4299 / JCM 9571 / NBRC 15438 / GSS1).